A 146-amino-acid polypeptide reads, in one-letter code: MLDQQTINIIKATVPVLKEHGVTITTTFYKNLFAKHPEVRPLFDMGRQESLEQPKALAMTVLAAAQNIENLPAILPAVKKIAVKHCQAGVAAAHYPIVGQELLGAIKEVLGDAATDDILDAWGKAYGVIADVFIQVEADLYAQAVE.

Residues 1 to 138 (MLDQQTINII…IADVFIQVEA (138 aa)) form the Globin domain. Heme b contacts are provided by Q53 and H85.

The protein belongs to the globin family. Homodimer.

In terms of biological role, this protein functions as a terminal oxidase. In Vitreoscilla stercoraria, this protein is Bacterial hemoglobin (vhb).